The chain runs to 450 residues: Tol-Pal system protein TolB (450 aa).

Positions 1 to 37 (MIERNGLQRMPFRLNRRHMISGMASAAVLLGSRQALG) are cleaved as a signal peptide.

Belongs to the TolB family. In terms of assembly, the Tol-Pal system is composed of five core proteins: the inner membrane proteins TolA, TolQ and TolR, the periplasmic protein TolB and the outer membrane protein Pal. They form a network linking the inner and outer membranes and the peptidoglycan layer.

It is found in the periplasm. In terms of biological role, part of the Tol-Pal system, which plays a role in outer membrane invagination during cell division and is important for maintaining outer membrane integrity. The polypeptide is Tol-Pal system protein TolB (Nitrobacter winogradskyi (strain ATCC 25391 / DSM 10237 / CIP 104748 / NCIMB 11846 / Nb-255)).